We begin with the raw amino-acid sequence, 112 residues long: Putative pterin-4-alpha-carbinolamine dehydratase (112 aa).

It belongs to the pterin-4-alpha-carbinolamine dehydratase family.

It carries out the reaction (4aS,6R)-4a-hydroxy-L-erythro-5,6,7,8-tetrahydrobiopterin = (6R)-L-erythro-6,7-dihydrobiopterin + H2O. This chain is Putative pterin-4-alpha-carbinolamine dehydratase, found in Vibrio parahaemolyticus serotype O3:K6 (strain RIMD 2210633).